Reading from the N-terminus, the 356-residue chain is Nuclear hormone receptor family member nhr-42 (356 aa).

A DNA-binding region (nuclear receptor) is located at residues Ser7–Ser82. Residues Cys10 to Cys30 form an NR C4-type zinc finger. An NR C4-type; atypical zinc finger spans residues Cys48 to Cys70. In terms of domain architecture, NR LBD spans Thr108–Glu356.

The protein belongs to the nuclear hormone receptor family.

It localises to the nucleus. In terms of biological role, orphan nuclear receptor. This Caenorhabditis elegans protein is Nuclear hormone receptor family member nhr-42 (nhr-42).